We begin with the raw amino-acid sequence, 101 residues long: NAD(P)H-quinone oxidoreductase subunit 4L, chloroplastic (101 aa).

3 helical membrane passes run 2–22 (ILEH…YGLI), 32–52 (MCLE…SDFF), and 61–81 (IFCI…LAIV).

It belongs to the complex I subunit 4L family. NDH is composed of at least 16 different subunits, 5 of which are encoded in the nucleus.

The protein localises to the plastid. Its subcellular location is the chloroplast thylakoid membrane. It carries out the reaction a plastoquinone + NADH + (n+1) H(+)(in) = a plastoquinol + NAD(+) + n H(+)(out). The catalysed reaction is a plastoquinone + NADPH + (n+1) H(+)(in) = a plastoquinol + NADP(+) + n H(+)(out). In terms of biological role, NDH shuttles electrons from NAD(P)H:plastoquinone, via FMN and iron-sulfur (Fe-S) centers, to quinones in the photosynthetic chain and possibly in a chloroplast respiratory chain. The immediate electron acceptor for the enzyme in this species is believed to be plastoquinone. Couples the redox reaction to proton translocation, and thus conserves the redox energy in a proton gradient. The polypeptide is NAD(P)H-quinone oxidoreductase subunit 4L, chloroplastic (Draba nemorosa (Woodland whitlowgrass)).